A 32-amino-acid chain; its full sequence is Photosystem II reaction center protein T (32 aa).

At M1 the chain carries N-formylmethionine. Topologically, residues 1–2 (ME) are lumenal. Residues 3–23 (TITYVFIFACIIALFFFAIFF) form a helical membrane-spanning segment. Residues 24-32 (REPPRITKK) are Cytoplasmic-facing.

This sequence belongs to the PsbT family. In terms of assembly, PSII is composed of 1 copy each of membrane proteins PsbA, PsbB, PsbC, PsbD, PsbE, PsbF, PsbH, PsbI, PsbJ, PsbK, PsbL, PsbM, PsbT, PsbX, PsbY, PsbZ, Psb30/Ycf12, PsbO, CyanoQ (PsbQ), PsbU, PsbV and a large number of cofactors. It forms dimeric complexes. Part of a photosystem II (PSII) assembly intermediate complex PSII-I; crystallized from a strain deleted of psbJ, it forms monomeric PSII before addition of the oxygen evolving complex. PSII-I includes 3 assembly factors not found in mature PSII (Psb27, Psb28 and Psb34). It depends on PSII binds multiple chlorophylls, carotenoids and specific lipids. as a cofactor.

Its subcellular location is the cellular thylakoid membrane. In terms of biological role, found at the monomer-monomer interface of the photosystem II (PS II) dimer, plays a role in assembly and dimerization of PSII. PSII is a light-driven water plastoquinone oxidoreductase, using light energy to abstract electrons from H(2)O, generating a proton gradient subsequently used for ATP formation. This Thermosynechococcus vestitus (strain NIES-2133 / IAM M-273 / BP-1) protein is Photosystem II reaction center protein T.